Consider the following 297-residue polypeptide: Carbamate kinase (297 aa).

This sequence belongs to the carbamate kinase family.

It localises to the cytoplasm. The catalysed reaction is hydrogencarbonate + NH4(+) + ATP = carbamoyl phosphate + ADP + H2O + H(+). It carries out the reaction carbamate + ATP = carbamoyl phosphate + ADP. The enzyme catalyses hydrogencarbonate + NH4(+) = carbamate + H2O + H(+). It participates in nitrogen metabolism; (S)-allantoin degradation. Kinase involved in the anaerobic nitrogen utilization via the assimilation of allantoin. Catalyzes the transfer of a phosphate group from carbamoyl phosphate to ADP to produce ATP and leave carbamate, which spontaneously hydrolyzes to ammonia and hydrogencarbonate. This chain is Carbamate kinase, found in Escherichia coli O157:H7.